Here is a 103-residue protein sequence, read N- to C-terminus: Small ribosomal subunit protein uS10 (103 aa).

It belongs to the universal ribosomal protein uS10 family. Part of the 30S ribosomal subunit.

Involved in the binding of tRNA to the ribosomes. This chain is Small ribosomal subunit protein uS10, found in Colwellia psychrerythraea (strain 34H / ATCC BAA-681) (Vibrio psychroerythus).